A 525-amino-acid chain; its full sequence is Asparagine synthetase domain-containing protein YML096W (525 aa).

C2 serves as the catalytic For GATase activity. In terms of domain architecture, Glutamine amidotransferase type-2 spans 2-209 (CGILLHYCPN…LNSNQRSHLP (208 aa)). The region spanning 210 to 523 (YEVTSEIDLN…GTDLLKENRN (314 aa)) is the Asparagine synthetase domain. The tract at residues 503–525 (SAKMTKDGNKHGTDLLKENRNCS) is disordered. Residues 506 to 525 (MTKDGNKHGTDLLKENRNCS) are compositionally biased toward basic and acidic residues.

It localises to the cytoplasm. In Saccharomyces cerevisiae (strain ATCC 204508 / S288c) (Baker's yeast), this protein is Asparagine synthetase domain-containing protein YML096W.